A 659-amino-acid chain; its full sequence is Acetyl-coenzyme A synthetase (659 aa).

A disordered region spans residues 1–35 (MATEQTKGQSSESISSVLSERRKFPPPEAFSSQSH). Residues 205 to 208 (RRGS), Thr323, and Asn347 each bind CoA. Residues 399–401 (GEP), 423–428 (DTWWQT), Asp512, and Arg527 each bind ATP. A CoA-binding site is contributed by Ser535. ATP is bound at residue Arg538. 3 residues coordinate Mg(2+): Val549, His551, and Val554. Lys621 is modified (N6-acetyllysine).

Belongs to the ATP-dependent AMP-binding enzyme family. Mg(2+) is required as a cofactor. Acetylated. Deacetylation by the SIR2-homolog deacetylase activates the enzyme.

It catalyses the reaction acetate + ATP + CoA = acetyl-CoA + AMP + diphosphate. In terms of biological role, catalyzes the conversion of acetate into acetyl-CoA (AcCoA), an essential intermediate at the junction of anabolic and catabolic pathways. AcsA undergoes a two-step reaction. In the first half reaction, AcsA combines acetate with ATP to form acetyl-adenylate (AcAMP) intermediate. In the second half reaction, it can then transfer the acetyl group from AcAMP to the sulfhydryl group of CoA, forming the product AcCoA. In Chlorobaculum tepidum (strain ATCC 49652 / DSM 12025 / NBRC 103806 / TLS) (Chlorobium tepidum), this protein is Acetyl-coenzyme A synthetase.